The primary structure comprises 623 residues: Vacuolar-sorting receptor 1 (623 aa).

An N-terminal signal peptide occupies residues 1–22 (MKCWRLSAILFLGFMLTSLSTA). The Lumenal portion of the chain corresponds to 23-564 (RFVVEKNSLS…SKTASQAKST (542 aa)). Residues 54 to 163 (QYGGSMAGNV…SFGEKLKDAI (110 aa)) enclose the PA domain. A glycan (N-linked (GlcNAc...) asparagine) is linked at N143. 2 EGF-like domains span residues 411-461 (ETNE…TTCE) and 464-511 (GHGR…KNCE). 6 disulfides stabilise this stretch: C415–C433, C422–C442, C444–C460, C468–C488, C475–C496, and C498–C510. The region spanning 512–554 (DIDECKDKKACQCPECSCKNTWGSYNCSCSGDLLYIKDQDTCI) is the EGF-like 3; calcium-binding domain. The N-linked (GlcNAc...) asparagine glycan is linked to N537. C540 and C553 are joined by a disulfide. The helical transmembrane segment at 565 to 585 (WAAFWVVLIALAMIAGGGFLV) threads the bilayer. Residues 586 to 623 (YKYRIRQYMDSEIRAIMAQYMPLDSQEEGPNHVNHQRG) lie on the Cytoplasmic side of the membrane. Positions 605 to 608 (YMPL) match the Tyrosine-based internalization motif motif.

It belongs to the VSR (BP-80) family. As to quaternary structure, interacts with the N-terminal propeptide of aleurein (proaleurein).

The protein resides in the membrane. Its subcellular location is the golgi apparatus membrane. It localises to the cytoplasmic vesicle. The protein localises to the clathrin-coated vesicle membrane. It is found in the prevacuolar compartment membrane. Its function is as follows. Vacuolar-sorting receptor (VSR) involved in clathrin-coated vesicles sorting from Golgi apparatus to vacuoles. Seems to binds preferentially proteins containing a N-terminal NPIR motif. The sequence is that of Vacuolar-sorting receptor 1 (BP80) from Pisum sativum (Garden pea).